The following is a 550-amino-acid chain: Hydroxylamine reductase (550 aa).

C5, C8, C17, and C23 together coordinate [4Fe-4S] cluster. Hybrid [4Fe-2O-2S] cluster-binding residues include H250, E274, C319, C405, C433, C458, E492, and K494. C405 is subject to Cysteine persulfide.

It belongs to the HCP family. [4Fe-4S] cluster serves as cofactor. It depends on hybrid [4Fe-2O-2S] cluster as a cofactor.

The protein resides in the cytoplasm. It catalyses the reaction A + NH4(+) + H2O = hydroxylamine + AH2 + H(+). Its function is as follows. Catalyzes the reduction of hydroxylamine to form NH(3) and H(2)O. This chain is Hydroxylamine reductase, found in Geobacter sulfurreducens (strain ATCC 51573 / DSM 12127 / PCA).